Reading from the N-terminus, the 448-residue chain is Phosphohexose mutases (448 aa).

Catalysis depends on serine 97, which acts as the Phosphoserine intermediate. Mg(2+) is bound by residues serine 97, aspartate 237, aspartate 239, and aspartate 241.

Belongs to the phosphohexose mutase family. Mg(2+) serves as cofactor.

It carries out the reaction alpha-D-glucose 1-phosphate = alpha-D-glucose 6-phosphate. The catalysed reaction is alpha-D-mannose 1-phosphate = D-mannose 6-phosphate. Its pathway is nucleotide-sugar biosynthesis; GDP-alpha-D-mannose biosynthesis; alpha-D-mannose 1-phosphate from D-fructose 6-phosphate: step 2/2. Involved in xanthan production. This is Phosphohexose mutases (xanA) from Xanthomonas campestris pv. campestris (strain B100).